A 453-amino-acid chain; its full sequence is GTPase Der (453 aa).

EngA-type G domains lie at 4–169 and 178–353; these read PIVA…PPAD and IGVA…EQHR. GTP contacts are provided by residues 10–17, 57–61, 120–123, 184–191, 231–235, and 296–299; these read GRPNVGKS, DTGGL, NKCE, DTAGI, and NKWD. Residues 354–439 form the KH-like domain; that stretch reads RRVGTSVINE…PIRLFWRGKK (86 aa).

This sequence belongs to the TRAFAC class TrmE-Era-EngA-EngB-Septin-like GTPase superfamily. EngA (Der) GTPase family. Associates with the 50S ribosomal subunit.

In terms of biological role, GTPase that plays an essential role in the late steps of ribosome biogenesis. The chain is GTPase Der from Synechococcus sp. (strain ATCC 27144 / PCC 6301 / SAUG 1402/1) (Anacystis nidulans).